The sequence spans 225 residues: Cytidylate kinase (225 aa).

Position 10 to 18 (10 to 18) interacts with ATP; the sequence is GPASSGKST.

Belongs to the cytidylate kinase family. Type 1 subfamily.

Its subcellular location is the cytoplasm. The catalysed reaction is CMP + ATP = CDP + ADP. It carries out the reaction dCMP + ATP = dCDP + ADP. The sequence is that of Cytidylate kinase from Streptococcus sanguinis (strain SK36).